The primary structure comprises 264 residues: Apolipoprotein A-I (264 aa).

The first 18 residues, 1-18 (MKAVVLAVAVLFLTGSQA), serve as a signal peptide directing secretion. Repeat copies occupy residues 67 to 88 (LNLL…EQLG) and 89 to 110 (SVTK…QQMN). The interval 67–264 (LNLLANWNTL…DQASKQLSAQ (198 aa)) is 10 X approximate tandem repeats. Methionine sulfoxide is present on methionine 109. One copy of the 3; half-length repeat lies at 111-121 (KDLEEVKQKVQ). Repeat copies occupy residues 122–142 (SYLD…RDKV), 144–165 (PLGK…EKLA), 166–187 (PLGQ…THLG), 188–208 (SYTQ…KESA), and 209–229 (PVSE…EKAK). Position 193 is a methionine sulfoxide (methionine 193). Residues 230 to 240 (PALEDLRQGLM) form a 9; half-length repeat. Methionine sulfoxide is present on methionine 240. Copy 10 of the repeat occupies 241-264 (PVMESLKASFLSSIDQASKQLSAQ).

The protein belongs to the apolipoprotein A1/A4/E family. Homodimer. Interacts with APOA1BP and CLU. Component of a sperm activating protein complex (SPAP), consisting of APOA1, an immunoglobulin heavy chain, an immunoglobulin light chain and albumin. Interacts with NDRG1. Interacts with SCGB3A2. Interacts with NAXE and YJEFN3. In terms of processing, glycosylated. Post-translationally, palmitoylated. Phosphorylation sites are present in the extracellular medium. In terms of tissue distribution, major protein of plasma HDL, also found in chylomicrons.

The protein localises to the secreted. Functionally, participates in the reverse transport of cholesterol from tissues to the liver for excretion by promoting cholesterol efflux from tissues and by acting as a cofactor for the lecithin cholesterol acyltransferase (LCAT). As part of the SPAP complex, activates spermatozoa motility. The polypeptide is Apolipoprotein A-I (Apoa1) (Heterocephalus glaber (Naked mole rat)).